An 835-amino-acid polypeptide reads, in one-letter code: Bifunctional uridylyltransferase/uridylyl-removing enzyme (835 aa).

Residues 1–316 (MTDEAEDSGP…GGKPVAERSP (316 aa)) form a uridylyltransferase region. The uridylyl-removing stretch occupies residues 317–650 (LAEGVVEQDG…SADGPEPLGV (334 aa)). The HD domain maps to 431–554 (VDRHLIETAV…DALATGPAAW (124 aa)). The segment at 610–645 (QTEPPADSAPAPSSPSSPSFPSPLSSPSSPSSADGP) is disordered. The segment covering 621-630 (PSSPSSPSFP) has biased composition (pro residues). Residues 631 to 642 (SPLSSPSSPSSA) are compositionally biased toward low complexity. 2 consecutive ACT domains span residues 651–736 (ELLI…LAER) and 765–835 (VIEV…SLRT).

Belongs to the GlnD family. Mg(2+) is required as a cofactor.

It catalyses the reaction [protein-PII]-L-tyrosine + UTP = [protein-PII]-uridylyl-L-tyrosine + diphosphate. The enzyme catalyses [protein-PII]-uridylyl-L-tyrosine + H2O = [protein-PII]-L-tyrosine + UMP + H(+). Its activity is regulated as follows. Uridylyltransferase (UTase) activity is inhibited by glutamine, while glutamine activates uridylyl-removing (UR) activity. In terms of biological role, modifies, by uridylylation and deuridylylation, the PII regulatory proteins (GlnB and homologs), in response to the nitrogen status of the cell that GlnD senses through the glutamine level. Under low glutamine levels, catalyzes the conversion of the PII proteins and UTP to PII-UMP and PPi, while under higher glutamine levels, GlnD hydrolyzes PII-UMP to PII and UMP (deuridylylation). Thus, controls uridylylation state and activity of the PII proteins, and plays an important role in the regulation of nitrogen assimilation and metabolism. The sequence is that of Bifunctional uridylyltransferase/uridylyl-removing enzyme from Streptomyces coelicolor (strain ATCC BAA-471 / A3(2) / M145).